We begin with the raw amino-acid sequence, 97 residues long: Co-chaperonin GroES (97 aa).

The protein belongs to the GroES chaperonin family. Heptamer of 7 subunits arranged in a ring. Interacts with the chaperonin GroEL.

Its subcellular location is the cytoplasm. Its function is as follows. Together with the chaperonin GroEL, plays an essential role in assisting protein folding. The GroEL-GroES system forms a nano-cage that allows encapsulation of the non-native substrate proteins and provides a physical environment optimized to promote and accelerate protein folding. GroES binds to the apical surface of the GroEL ring, thereby capping the opening of the GroEL channel. The sequence is that of Co-chaperonin GroES from Blochmanniella pennsylvanica (strain BPEN).